Consider the following 104-residue polypeptide: NLSSLLKSPMPIPRRARRAFLSSLRFLCWAKVRRAGFSGKFNPTPVPVLFSNKLVRQGLETLYCSKRINIVKIQSDLKSGNLVLSKELLIVQQKLVSKQNQVNN.

It localises to the mitochondrion. This is an uncharacterized protein from Claviceps purpurea (Ergot fungus).